Here is a 177-residue protein sequence, read N- to C-terminus: Protein PrsK (177 aa).

The first 21 residues, 1 to 21, serve as a signal peptide directing secretion; that stretch reads MIKSTGALLLFAALSAGQAMA.

Its subcellular location is the fimbrium. The protein is Protein PrsK (prsK) of Escherichia coli.